Here is a 182-residue protein sequence, read N- to C-terminus: Large ribosomal subunit protein bL17 (182 aa).

Positions 126-182 (ERANRVAASKAKKAEAEAAEAKAEEAEEAPEVEADTATDKAAEAEAAEAADEAAEDK) are disordered. The span at 137 to 149 (KKAEAEAAEAKAE) shows a compositional bias: basic and acidic residues. Composition is skewed to acidic residues over residues 150–161 (EAEEAPEVEADT) and 170–182 (EAAE…AEDK).

Belongs to the bacterial ribosomal protein bL17 family. Part of the 50S ribosomal subunit. Contacts protein L32.

In Corynebacterium jeikeium (strain K411), this protein is Large ribosomal subunit protein bL17.